The primary structure comprises 209 residues: Pyridoxine/pyridoxamine 5'-phosphate oxidase (209 aa).

Substrate is bound by residues 7–10 and K64; that span reads REDY. Residues 59–64, 74–75, R80, and K81 contribute to the FMN site; these read RIVLLK and FT. Substrate-binding residues include Y121, R125, and S129. FMN-binding positions include 138-139 and W182; that span reads QS. 188 to 190 provides a ligand contact to substrate; sequence RLH. R192 serves as a coordination point for FMN.

Belongs to the pyridoxamine 5'-phosphate oxidase family. In terms of assembly, homodimer. FMN serves as cofactor.

The catalysed reaction is pyridoxamine 5'-phosphate + O2 + H2O = pyridoxal 5'-phosphate + H2O2 + NH4(+). It carries out the reaction pyridoxine 5'-phosphate + O2 = pyridoxal 5'-phosphate + H2O2. It participates in cofactor metabolism; pyridoxal 5'-phosphate salvage; pyridoxal 5'-phosphate from pyridoxamine 5'-phosphate: step 1/1. It functions in the pathway cofactor metabolism; pyridoxal 5'-phosphate salvage; pyridoxal 5'-phosphate from pyridoxine 5'-phosphate: step 1/1. Its function is as follows. Catalyzes the oxidation of either pyridoxine 5'-phosphate (PNP) or pyridoxamine 5'-phosphate (PMP) into pyridoxal 5'-phosphate (PLP). This chain is Pyridoxine/pyridoxamine 5'-phosphate oxidase, found in Actinobacillus pleuropneumoniae serotype 5b (strain L20).